We begin with the raw amino-acid sequence, 210 residues long: Thymidylate kinase (210 aa).

Residue Gly-10–Ser-17 coordinates ATP.

Belongs to the thymidylate kinase family.

It carries out the reaction dTMP + ATP = dTDP + ADP. In terms of biological role, phosphorylation of dTMP to form dTDP in both de novo and salvage pathways of dTTP synthesis. This chain is Thymidylate kinase, found in Ectopseudomonas mendocina (strain ymp) (Pseudomonas mendocina).